The primary structure comprises 464 residues: Glycine--tRNA ligase (464 aa).

Substrate-binding residues include Arg-104 and Glu-175. ATP is bound by residues 207 to 209 (RNE), 217 to 222 (FRTREF), 292 to 293 (EL), and 336 to 339 (GVNR). 222–226 (FEQME) is a binding site for substrate. A substrate-binding site is contributed by 332–336 (EPALG).

The protein belongs to the class-II aminoacyl-tRNA synthetase family. Homodimer.

Its subcellular location is the cytoplasm. It catalyses the reaction tRNA(Gly) + glycine + ATP = glycyl-tRNA(Gly) + AMP + diphosphate. Catalyzes the attachment of glycine to tRNA(Gly). This chain is Glycine--tRNA ligase, found in Leptospira interrogans serogroup Icterohaemorrhagiae serovar copenhageni (strain Fiocruz L1-130).